A 308-amino-acid polypeptide reads, in one-letter code: UDP-N-acetylenolpyruvoylglucosamine reductase (308 aa).

Residues 32–196 (VGGPAARLYK…ISAKLQLSPG (165 aa)) form the FAD-binding PCMH-type domain. Residue Arg-176 is part of the active site. Ser-225 (proton donor) is an active-site residue. Glu-296 is a catalytic residue.

It belongs to the MurB family. Requires FAD as cofactor.

It localises to the cytoplasm. The enzyme catalyses UDP-N-acetyl-alpha-D-muramate + NADP(+) = UDP-N-acetyl-3-O-(1-carboxyvinyl)-alpha-D-glucosamine + NADPH + H(+). It functions in the pathway cell wall biogenesis; peptidoglycan biosynthesis. Its function is as follows. Cell wall formation. The polypeptide is UDP-N-acetylenolpyruvoylglucosamine reductase (Legionella pneumophila (strain Corby)).